A 338-amino-acid chain; its full sequence is Anthranilate phosphoribosyltransferase (338 aa).

5-phospho-alpha-D-ribose 1-diphosphate-binding positions include G78, 81-82, S86, 88-91, 106-114, and S118; these read GD, NIST, and KHGNKSITS. G78 contacts anthranilate. S90 is a binding site for Mg(2+). N109 contacts anthranilate. R163 provides a ligand contact to anthranilate. Mg(2+) is bound by residues D222 and E223.

It belongs to the anthranilate phosphoribosyltransferase family. In terms of assembly, homodimer. Mg(2+) is required as a cofactor.

It carries out the reaction N-(5-phospho-beta-D-ribosyl)anthranilate + diphosphate = 5-phospho-alpha-D-ribose 1-diphosphate + anthranilate. It functions in the pathway amino-acid biosynthesis; L-tryptophan biosynthesis; L-tryptophan from chorismate: step 2/5. Functionally, catalyzes the transfer of the phosphoribosyl group of 5-phosphorylribose-1-pyrophosphate (PRPP) to anthranilate to yield N-(5'-phosphoribosyl)-anthranilate (PRA). This Staphylococcus carnosus (strain TM300) protein is Anthranilate phosphoribosyltransferase.